Consider the following 1025-residue polypeptide: Dihydropyrimidine dehydrogenase [NADP(+)] (1025 aa).

Residues 69–100 (ERGALREAMRCLKCADAPCQKSCPTNLDIKSF) enclose the 4Fe-4S ferredoxin-type 1 domain. [4Fe-4S] cluster-binding residues include cysteine 79, cysteine 82, cysteine 87, and cysteine 91. Valine 129 is an FAD binding site. Positions 130, 136, 140, and 156 each coordinate [4Fe-4S] cluster. Residues 194–198 (GAGPA), 218–226 (EKQEYVGGI), arginine 235, and leucine 261 each bind FAD. NADP(+)-binding positions include 340–343 (AGDT), 364–365 (RK), and arginine 371. Lysine 384 carries the N6-acetyllysine modification. NADP(+) contacts are provided by residues 437-439 (AFG) and 481-487 (DVVGIAN). Position 480–489 (480–489 (GDVVGIANTT)) interacts with FAD. FMN contacts are provided by residues serine 550 and 574 to 575 (KT). Substrate-binding positions include asparagine 609 and 668 to 670 (NLS). Catalysis depends on cysteine 671, which acts as the Proton acceptor. Position 709 (lysine 709) interacts with FMN. 736-737 (NT) is a binding site for substrate. Residues glycine 767, 793–795 (TGG), and 816–817 (CS) each bind FMN. 4Fe-4S ferredoxin-type domains follow at residues 944 to 976 (VVAV…FDPE) and 978 to 1007 (HLPT…MVSR). Positions 953, 956, 959, 963, 986, 989, 992, and 996 each coordinate [4Fe-4S] cluster.

This sequence belongs to the dihydropyrimidine dehydrogenase family. As to quaternary structure, homodimer. Requires FAD as cofactor. It depends on FMN as a cofactor. The cofactor is [4Fe-4S] cluster.

The protein resides in the cytoplasm. The catalysed reaction is 5,6-dihydrouracil + NADP(+) = uracil + NADPH + H(+). It catalyses the reaction 5,6-dihydrothymine + NADP(+) = thymine + NADPH + H(+). It functions in the pathway amino-acid biosynthesis; beta-alanine biosynthesis. With respect to regulation, inactivated by 5-iodouracil. Functionally, involved in pyrimidine base degradation. Catalyzes the reduction of uracil and thymine. Also involved the degradation of the chemotherapeutic drug 5-fluorouracil. This chain is Dihydropyrimidine dehydrogenase [NADP(+)] (DPYD), found in Bos taurus (Bovine).